Here is a 323-residue protein sequence, read N- to C-terminus: Mas-related G-protein coupled receptor member B4 (323 aa).

At 1–34 (MSPTTQAWSINNTVVKENYYTEILSCITTFNTLN) the chain is on the extracellular side. An N-linked (GlcNAc...) asparagine glycan is attached at Asn11. Residues 35–55 (FLIVIISVVGMAGNATVLWLL) traverse the membrane as a helical segment. The Cytoplasmic portion of the chain corresponds to 56–63 (GFHMHRNA). Residues 64 to 84 (FSVYVLNLAGADFLYLCAQTV) form a helical membrane-spanning segment. Residues 85–98 (YSLECVLQFDNSYF) are Extracellular-facing. The chain crosses the membrane as a helical span at residues 99 to 119 (YFLLTILMFNYLAGFCMIAAI). At 120 to 147 (STERCLSVTWPIWYHCQRPRHTSATVCA) the chain is on the cytoplasmic side. The helical transmembrane segment at 148–168 (LFWAFSLLLSLLLGQGCGFLF) threads the bilayer. Residues 169-180 (SKFDYSFCRYCN) lie on the Extracellular side of the membrane. A helical transmembrane segment spans residues 181–201 (FIATAFLIVIFMVLFVSSLAL). Over 202-224 (LAKIICGSHRIPVTRFYVTIALT) the chain is Cytoplasmic. The helical transmembrane segment at 225 to 245 (VLVFIFFGLPIGICVFLLPWI) threads the bilayer. At 246-255 (HMMLSSFFYE) the chain is on the extracellular side. A helical membrane pass occupies residues 256 to 276 (MVTLLSCVNSCANPIIYFFVG). Residues 277-323 (SIRHHRLQRQTLKLLLQRAMQDTPEEEGGERGPSQKSEDLEVVRCSS) are Cytoplasmic-facing. The interval 298-323 (DTPEEEGGERGPSQKSEDLEVVRCSS) is disordered. Positions 312 to 323 (KSEDLEVVRCSS) are enriched in basic and acidic residues.

It belongs to the G-protein coupled receptor 1 family. Mas subfamily. Expressed strongly in newborn dorsal root ganglia, adult dorsal root ganglia and trigeminal ganlia.

The protein localises to the membrane. Functionally, orphan receptor. Probably involved in the function of nociceptive neurons. May regulate nociceptor function and/or development, including the sensation or modulation of pain. The chain is Mas-related G-protein coupled receptor member B4 (Mrgprb4) from Rattus norvegicus (Rat).